A 184-amino-acid chain; its full sequence is Lipoprotein signal peptidase (184 aa).

3 consecutive transmembrane segments (helical) span residues 23 to 43, 88 to 108, and 110 to 130; these read FLYYKLALILFVGFVILFQVF, PGLVYFLQGFLSFIALFFLVF, and TSYNYIFWITTLAFGSLGNFF. Active-site residues include aspartate 142 and aspartate 157. A helical transmembrane segment spans residues 156–176; sequence ADCCITFSFIGLFLSFLIQFF.

It belongs to the peptidase A8 family.

Its subcellular location is the cell membrane. It catalyses the reaction Release of signal peptides from bacterial membrane prolipoproteins. Hydrolyzes -Xaa-Yaa-Zaa-|-(S,diacylglyceryl)Cys-, in which Xaa is hydrophobic (preferably Leu), and Yaa (Ala or Ser) and Zaa (Gly or Ala) have small, neutral side chains.. The protein operates within protein modification; lipoprotein biosynthesis (signal peptide cleavage). In terms of biological role, this protein specifically catalyzes the removal of signal peptides from prolipoproteins. This is Lipoprotein signal peptidase from Mycoplasma pneumoniae (strain ATCC 29342 / M129 / Subtype 1) (Mycoplasmoides pneumoniae).